A 142-amino-acid polypeptide reads, in one-letter code: RNA-directed DNA polymerase homolog (142 aa).

It localises to the mitochondrion. The enzyme catalyses RNA(n) + a ribonucleoside 5'-triphosphate = RNA(n+1) + diphosphate. This is RNA-directed DNA polymerase homolog from Oenothera berteroana (Bertero's evening primrose).